Reading from the N-terminus, the 146-residue chain is Ribosome maturation factor RimP (146 aa).

Belongs to the RimP family.

Its subcellular location is the cytoplasm. Functionally, required for maturation of 30S ribosomal subunits. In Helicobacter pylori (strain ATCC 700392 / 26695) (Campylobacter pylori), this protein is Ribosome maturation factor RimP.